The following is a 434-amino-acid chain: ATP-dependent protease ATPase subunit HslU (434 aa).

Residues Ile18, 60-65 (GVGKTE), Asp247, Glu312, and Arg384 contribute to the ATP site.

It belongs to the ClpX chaperone family. HslU subfamily. As to quaternary structure, a double ring-shaped homohexamer of HslV is capped on each side by a ring-shaped HslU homohexamer. The assembly of the HslU/HslV complex is dependent on binding of ATP.

It localises to the cytoplasm. Functionally, ATPase subunit of a proteasome-like degradation complex; this subunit has chaperone activity. The binding of ATP and its subsequent hydrolysis by HslU are essential for unfolding of protein substrates subsequently hydrolyzed by HslV. HslU recognizes the N-terminal part of its protein substrates and unfolds these before they are guided to HslV for hydrolysis. This is ATP-dependent protease ATPase subunit HslU from Brucella ovis (strain ATCC 25840 / 63/290 / NCTC 10512).